Here is a 110-residue protein sequence, read N- to C-terminus: Cysteine-rich and transmembrane domain-containing protein 1 (110 aa).

Over residues 1 to 18 (MNYENPPPYASPPAPYPP) the composition is skewed to pro residues. The interval 1 to 45 (MNYENPPPYASPPAPYPPYGQQQPSYPVPNQYPGNPPGPVGYQPA) is disordered. Residues 19-29 (YGQQQPSYPVP) are compositionally biased toward low complexity. The helical transmembrane segment at 87–104 (SGESACLTACWTALCCCC) threads the bilayer.

Belongs to the CYSTM1 family.

The protein localises to the membrane. The protein is Cysteine-rich and transmembrane domain-containing protein 1 (cystm1) of Xenopus tropicalis (Western clawed frog).